A 212-amino-acid chain; its full sequence is Adenylate kinase (212 aa).

Position 14–19 (14–19 (GSGKGT)) interacts with ATP. Positions 34-63 (STGDLFRKKISEDSQFAAQIQNYLSSGSYV) are NMP. Residues T35, R40, 61-63 (SYV), 89-92 (GYPR), and Q96 each bind AMP. Positions 126–163 (QRLFCQKCQKSYNLLLAKPKNGLKCDLDNTDLITRNDD) are LID. R127 provides a ligand contact to ATP. Zn(2+) contacts are provided by C130 and C133. Residue 136 to 137 (SY) coordinates ATP. Zn(2+)-binding residues include C150 and D153. Positions 160 and 171 each coordinate AMP. Q199 lines the ATP pocket.

The protein belongs to the adenylate kinase family. Monomer.

It localises to the cytoplasm. It carries out the reaction AMP + ATP = 2 ADP. The protein operates within purine metabolism; AMP biosynthesis via salvage pathway; AMP from ADP: step 1/1. In terms of biological role, catalyzes the reversible transfer of the terminal phosphate group between ATP and AMP. Plays an important role in cellular energy homeostasis and in adenine nucleotide metabolism. The chain is Adenylate kinase from Mesomycoplasma hyopneumoniae (strain 7448) (Mycoplasma hyopneumoniae).